Here is a 393-residue protein sequence, read N- to C-terminus: Na(+)/H(+) antiporter NhaA (393 aa).

The next 11 helical transmembrane spans lie at 18-38, 65-85, 101-121, 131-151, 160-180, 184-204, 210-230, 260-280, 298-318, 334-354, and 369-389; these read AGGV…NSPW, MLIW…GLEI, MLPA…YAAI, GWGI…VLLG, VFLT…IAFF, NLSP…LGLN, AVGP…KSGI, ALQP…NAGV, IAFG…WLLI, FFGV…IGSL, and IGVL…LLAS.

Belongs to the NhaA Na(+)/H(+) (TC 2.A.33) antiporter family.

It localises to the cell inner membrane. It carries out the reaction Na(+)(in) + 2 H(+)(out) = Na(+)(out) + 2 H(+)(in). Its function is as follows. Na(+)/H(+) antiporter that extrudes sodium in exchange for external protons. The chain is Na(+)/H(+) antiporter NhaA from Albidiferax ferrireducens (strain ATCC BAA-621 / DSM 15236 / T118) (Rhodoferax ferrireducens).